Reading from the N-terminus, the 199-residue chain is 7-methyl-GTP pyrophosphatase (199 aa).

The active-site Proton acceptor is the aspartate 74.

Belongs to the Maf family. YceF subfamily. Requires a divalent metal cation as cofactor.

It is found in the cytoplasm. The catalysed reaction is N(7)-methyl-GTP + H2O = N(7)-methyl-GMP + diphosphate + H(+). Nucleoside triphosphate pyrophosphatase that hydrolyzes 7-methyl-GTP (m(7)GTP). May have a dual role in cell division arrest and in preventing the incorporation of modified nucleotides into cellular nucleic acids. This chain is 7-methyl-GTP pyrophosphatase, found in Cupriavidus metallidurans (strain ATCC 43123 / DSM 2839 / NBRC 102507 / CH34) (Ralstonia metallidurans).